Consider the following 464-residue polypeptide: MMYDDTIAAIATPPGEGGIGIVRISGKDALSILERIFVPVRPGRWKPYRMRYGHVVDGAGVRVDEALAVFMRGPRSFTAEDTVEISVHGGPLVVERVLQQALAAGARAANPGEFTMRAFLNGRIDLTQAEATLDIITARTTTALALAEAQLGGWLSHELRRIRALLIDPLAYCTALVDFPEDEVEPQDVETPLTAAVQALDTLVATAEQGIIYRQGARATLVGRPNAGKSSLLNALLRIDRAIVTPIPGTTRDTLEETANLGGVPVVLTDTAGIVESVDPVERLGVERSRQAVAQADLLLLVVEGVSQPVDDDREIVALTRDKRTVLIVNKIDLIDGADAVQECMKFLKCAYENLRGVPFDATIAVSALTGQGLDMLGATVARLLLGDSSPADGRLVTNVRHRDALARAATHARDALDSFRRGVSPDLLAVDLTAAINAIGEVTGEAVGDDLLHAIFSRFCIGK.

(6S)-5-formyl-5,6,7,8-tetrahydrofolate-binding residues include Arg23, Glu84, and Arg123. The TrmE-type G domain maps to 216-386; sequence GARATLVGRP…LGATVARLLL (171 aa). Asn226 lines the K(+) pocket. Residues 226-231, 245-251, and 270-273 contribute to the GTP site; these read NAGKSS, TPIPGTT, and DTAG. Position 230 (Ser230) interacts with Mg(2+). K(+) is bound by residues Thr245, Ile247, and Thr250. Mg(2+) is bound at residue Thr251. Residue Lys464 coordinates (6S)-5-formyl-5,6,7,8-tetrahydrofolate.

This sequence belongs to the TRAFAC class TrmE-Era-EngA-EngB-Septin-like GTPase superfamily. TrmE GTPase family. Homodimer. Heterotetramer of two MnmE and two MnmG subunits. K(+) serves as cofactor.

It localises to the cytoplasm. Functionally, exhibits a very high intrinsic GTPase hydrolysis rate. Involved in the addition of a carboxymethylaminomethyl (cmnm) group at the wobble position (U34) of certain tRNAs, forming tRNA-cmnm(5)s(2)U34. The polypeptide is tRNA modification GTPase MnmE (Roseiflexus castenholzii (strain DSM 13941 / HLO8)).